The sequence spans 481 residues: UDP-N-acetylmuramoyl-L-alanyl-D-glutamate--L-lysine ligase (481 aa).

Position 42 (Ser42) interacts with UDP-N-acetyl-alpha-D-muramoyl-L-alanyl-D-glutamate. 118-124 (GTKGKTT) contributes to the ATP binding site. UDP-N-acetyl-alpha-D-muramoyl-L-alanyl-D-glutamate contacts are provided by residues Gln158, 160-161 (TT), Ser187, and Arg195. At Lys229 the chain carries N6-carboxylysine. Residues 404-407 (DDPN) carry the L-lysine recognition motif motif.

This sequence belongs to the MurCDEF family. MurE subfamily. Carboxylation is probably crucial for Mg(2+) binding and, consequently, for the gamma-phosphate positioning of ATP.

It localises to the cytoplasm. The enzyme catalyses UDP-N-acetyl-alpha-D-muramoyl-L-alanyl-D-glutamate + L-lysine + ATP = UDP-N-acetyl-alpha-D-muramoyl-L-alanyl-gamma-D-glutamyl-L-lysine + ADP + phosphate + H(+). It participates in cell wall biogenesis; peptidoglycan biosynthesis. Functionally, catalyzes the addition of L-lysine to the nucleotide precursor UDP-N-acetylmuramoyl-L-alanyl-D-glutamate (UMAG) in the biosynthesis of bacterial cell-wall peptidoglycan. This Streptococcus pyogenes serotype M4 (strain MGAS10750) protein is UDP-N-acetylmuramoyl-L-alanyl-D-glutamate--L-lysine ligase.